A 365-amino-acid polypeptide reads, in one-letter code: MTSVFKSPSTYVQGRNVTTDIGTHAESLGDTALLVADEIVMDMIESDVHESLAEAGLDGSSVVFNGESSEDEIERIASVAVDEGADIVIGAGGGKALDTAKAVREEVGGAMVSMPTIASMDAPTSSLSVIYSEHGEFEDYWYYEQHPDLVIVDTEVVAAAPARFLRSGIADGLATWFEADAVAQSGGDNEVGGKPTRAGHKLAELCYETLREHGAGALDAVEHDAVTESVDAVIEANTLLSGLGFESGGLAAAHSVHNGLTQLAETHDATHGEKVNIGTITQLVLEGHSDARIEEFIEFSVELGLPVTLGEIGITNPEQVDLDVVAEAACDEAETIHDEPFDVTPAMVRDALLTADEMGRRVRDR.

NAD(+) contacts are provided by D37, G94, K95, T116, S119, S125, L127, and Y131. 3 residues coordinate Zn(2+): D171, H254, and H271.

This sequence belongs to the iron-containing alcohol dehydrogenase family. Zn(2+) is required as a cofactor.

It carries out the reaction ethylene glycol + NAD(+) = glycolaldehyde + NADH + H(+). Is subject to substrate inhibition. In terms of biological role, oxidoreductase involved in the non-carboxylating pentose bisphosphate pathway, a nucleoside degradation pathway present in some halophilic archaea. Catalyzes the reduction of glycolaldehyde to ethylene glycol. Cannot catalyze the oxidation of glycerol 1-phosphate nor the reduction of dihydroxyacetone phosphate (DHAP). This Halobacterium salinarum (strain ATCC 700922 / JCM 11081 / NRC-1) (Halobacterium halobium) protein is Glycolaldehyde reductase.